A 130-amino-acid chain; its full sequence is Glycine cleavage system H protein (130 aa).

Residues 24–106 (EYTVGITEHA…YHEGWLFRIK (83 aa)) enclose the Lipoyl-binding domain. At Lys-65 the chain carries N6-lipoyllysine.

This sequence belongs to the GcvH family. As to quaternary structure, the glycine cleavage system is composed of four proteins: P, T, L and H. (R)-lipoate is required as a cofactor.

The glycine cleavage system catalyzes the degradation of glycine. The H protein shuttles the methylamine group of glycine from the P protein to the T protein. This is Glycine cleavage system H protein from Photorhabdus laumondii subsp. laumondii (strain DSM 15139 / CIP 105565 / TT01) (Photorhabdus luminescens subsp. laumondii).